A 313-amino-acid chain; its full sequence is Intelectin-1 (313 aa).

The N-terminal stretch at 1-18 is a signal peptide; it reads MNQLSFLLFLIATTRGWS. In terms of domain architecture, Fibrinogen C-terminal spans 32 to 255; it reads SSSPSLPRSC…AANALCAGMR (224 aa). Cys41 and Cys70 are joined by a disulfide. Residues His86, Glu87, Asp89, Gly92, Gly97, Asp98, and Asp133 each contribute to the Ca(2+) site. 3 disulfides stabilise this stretch: Cys94/Cys280, Cys199/Cys259, and Cys251/Cys265. An N-linked (GlcNAc...) asparagine glycan is attached at Asn163. Ca(2+) contacts are provided by Asn260, Glu262, Glu274, and Asp282. Residues 262–263 and Glu274 contribute to the a carbohydrate site; that span reads EH. Residue Ser298 is the site of GPI-anchor amidated serine attachment. A propeptide spanning residues 299–313 is cleaved from the precursor; the sequence is SSREITEAAVLLFYR.

As to quaternary structure, homotrimer; disulfide-linked. May interact with LTF. N-glycosylated. In terms of tissue distribution, highly expressed in omental adipose tissue where it is found in stromal vascular cells but not in fat cells but is barely detectable in subcutaneous adipose tissue (at protein level). Highly expressed in the small intestine. Also found in the heart, testis, colon, salivary gland, skeletal muscle, pancreas and thyroid and, to a lesser degree, in the uterus, spleen, prostate, lymph node and thymus.

It localises to the cell membrane. Its subcellular location is the secreted. Its function is as follows. Lectin that specifically recognizes microbial carbohydrate chains in a calcium-dependent manner. Binds to microbial glycans that contain a terminal acyclic 1,2-diol moiety, including beta-linked D-galactofuranose (beta-Galf), D-phosphoglycerol-modified glycans, D-glycero-D-talo-oct-2-ulosonic acid (KO) and 3-deoxy-D-manno-oct-2-ulosonic acid (KDO). Binds to glycans from Gram-positive and Gram-negative bacteria, including K.pneumoniae, S.pneumoniae, Y.pestis, P.mirabilis and P.vulgaris. Does not bind human glycans. Probably plays a role in the defense system against microorganisms. May function as adipokine that has no effect on basal glucose uptake but enhances insulin-stimulated glucose uptake in adipocytes. Increases AKT phosphorylation in the absence and presence of insulin. May interact with lactoferrin/LTF and increase its uptake, and may thereby play a role in iron absorption. This Homo sapiens (Human) protein is Intelectin-1 (ITLN1).